A 277-amino-acid polypeptide reads, in one-letter code: MADDAVVEEGSVEVSALAAGRPSWSWQRPGERARTPGRKAEDKEWVPVTKLGRLVKDMKIKSLEEIYLYSLPIKESEIIDFFLGSALKDEVLKIMPVQKQTRAGQRTRFKAFVAIGDYNGHVGLGVKCSKEVATAIRGAIILAKLSIIPVRRGYWGNKIGKPHTVPCKVTGRCGSVLVRLIPAPRGTGIVSAPVPKKLLMMAGIDDCYTSARGCTATLGNFAKATFDAISKTYSYLTPDLWKETVFTKSPYQEFTDHLAKTHTRVSVQRTQAAVQPS.

The segment at 18–40 (AAGRPSWSWQRPGERARTPGRKA) is disordered. Residues 29–40 (PGERARTPGRKA) show a composition bias toward basic and acidic residues. An S5 DRBM domain is found at 87–150 (LKDEVLKIMP…ILAKLSIIPV (64 aa)).

The protein belongs to the universal ribosomal protein uS5 family. As to quaternary structure, component of the small ribosomal subunit.

It is found in the cytoplasm. It localises to the nucleus. Its subcellular location is the nucleolus. Component of the ribosome, a large ribonucleoprotein complex responsible for the synthesis of proteins in the cell. The small ribosomal subunit (SSU) binds messenger RNAs (mRNAs) and translates the encoded message by selecting cognate aminoacyl-transfer RNA (tRNA) molecules. The large subunit (LSU) contains the ribosomal catalytic site termed the peptidyl transferase center (PTC), which catalyzes the formation of peptide bonds, thereby polymerizing the amino acids delivered by tRNAs into a polypeptide chain. The nascent polypeptides leave the ribosome through a tunnel in the LSU and interact with protein factors that function in enzymatic processing, targeting, and the membrane insertion of nascent chains at the exit of the ribosomal tunnel. Plays a role in the assembly and function of the 40S ribosomal subunit. Mutations in this protein affects the control of translational fidelity. Involved in nucleolar processing of pre-18S ribosomal RNA and ribosome assembly. The sequence is that of Small ribosomal subunit protein uS5 (rps2) from Ictalurus punctatus (Channel catfish).